A 291-amino-acid polypeptide reads, in one-letter code: Phytanoyl-CoA dioxygenase domain-containing protein 1 (291 aa).

T55 bears the Phosphothreonine mark. 2-oxoglutarate is bound by residues K102, M141, 156-158 (HQD), and W174. Residues H156 and D158 each contribute to the Fe cation site. H246 lines the Fe cation pocket. Residues S248 and R257 each contribute to the 2-oxoglutarate site.

This sequence belongs to the PhyH family. PHYHD1 subfamily. It depends on Fe cation as a cofactor.

Functionally, 2-oxoglutarate(2OG)-dependent dioxygenase that catalyzes the conversion of 2-oxoglutarate to succinate and CO(2) in an iron-dependent manner. However, does not couple 2OG turnover to the hydroxylation of acyl-coenzyme A derivatives, implying that it is not directly involved in phytanoyl coenzyme-A metabolism. Does not show detectable activity towards fatty acid CoA thioesters. This is Phytanoyl-CoA dioxygenase domain-containing protein 1 from Mus musculus (Mouse).